The following is a 370-amino-acid chain: Anhydro-N-acetylmuramic acid kinase (370 aa).

12–19 is a binding site for ATP; it reads GTSLDGVD.

The protein belongs to the anhydro-N-acetylmuramic acid kinase family.

It carries out the reaction 1,6-anhydro-N-acetyl-beta-muramate + ATP + H2O = N-acetyl-D-muramate 6-phosphate + ADP + H(+). Its pathway is amino-sugar metabolism; 1,6-anhydro-N-acetylmuramate degradation. It participates in cell wall biogenesis; peptidoglycan recycling. Functionally, catalyzes the specific phosphorylation of 1,6-anhydro-N-acetylmuramic acid (anhMurNAc) with the simultaneous cleavage of the 1,6-anhydro ring, generating MurNAc-6-P. Is required for the utilization of anhMurNAc either imported from the medium or derived from its own cell wall murein, and thus plays a role in cell wall recycling. In Pectobacterium atrosepticum (strain SCRI 1043 / ATCC BAA-672) (Erwinia carotovora subsp. atroseptica), this protein is Anhydro-N-acetylmuramic acid kinase.